The chain runs to 394 residues: Protein NDRG1 (394 aa).

S2 is modified (N-acetylserine). A phosphoserine mark is found at S2, S319, and S326. The interval 325–394 (RSRTASGSSV…AGPKSMEVSC (70 aa)) is disordered. Residues 327–339 (RTASGSSVTSLEG) show a composition bias toward polar residues. At T328 the chain carries Phosphothreonine. Residue S330 is modified to Phosphoserine. S332 is modified (phosphoserine; by SGK1). S333 is subject to Phosphoserine. T335 is subject to Phosphothreonine. Residue S336 is modified to Phosphoserine. A run of 3 repeats spans residues 339–348 (GTRSRSHTSE), 349–358 (GPRSRSHTSE), and 359–368 (GSRSRSHTSE). The segment at 339–368 (GTRSRSHTSEGPRSRSHTSEGSRSRSHTSE) is 3 X 10 AA tandem repeats of G-[PST]-R-S-R-S-H-T-S-E. At T340 the chain carries Phosphothreonine. Position 342 is a phosphoserine (S342). A compositionally biased stretch (basic and acidic residues) spans 345 to 371 (HTSEGPRSRSHTSEGSRSRSHTSEDAR). T346 carries the phosphothreonine modification. Position 352 is a phosphoserine (S352). At T356 the chain carries Phosphothreonine; by SGK1. 2 positions are modified to phosphoserine: S362 and S364. 2 positions are modified to phosphothreonine: T366 and T375. Residues 374 to 386 (ITPSSGATGNNAG) are compositionally biased toward polar residues.

The protein belongs to the NDRG family. In terms of assembly, interacts with RAB4A (membrane-bound form); the interaction involves NDRG1 in vesicular recycling of CDH1. Interacts with APOA1, APOA2, PRA1 and RTN1. Post-translationally, under stress conditions, phosphorylated in the C-terminal on many serine and threonine residues. Phosphorylated in vitro by PKA. Phosphorylation enhanced by increased intracellular cAMP levels. Homocysteine induces dephosphorylation. Phosphorylation by SGK1 is cell cycle dependent.

Its subcellular location is the cytoplasm. It is found in the cytosol. The protein localises to the cytoskeleton. The protein resides in the microtubule organizing center. It localises to the centrosome. Its subcellular location is the nucleus. It is found in the cell membrane. Stress-responsive protein involved in hormone responses, cell growth, and differentiation. Acts as a tumor suppressor in many cell types. Necessary but not sufficient for p53/TP53-mediated caspase activation and apoptosis. Has a role in cell trafficking notably of the Schwann cell and is necessary for the maintenance and development of the peripheral nerve myelin sheath. Required for vesicular recycling of CDH1 and TF. May also function in lipid trafficking. Protects cells from spindle disruption damage. Functions in p53/TP53-dependent mitotic spindle checkpoint. Regulates microtubule dynamics and maintains euploidy. This chain is Protein NDRG1 (Ndrg1), found in Rattus norvegicus (Rat).